The sequence spans 173 residues: Photosystem I assembly protein Ycf3 (173 aa).

3 TPR repeats span residues 35–68 (AYIY…EENK), 72–105 (GETL…NPKQ), and 120–153 (GRNA…YPGG).

This sequence belongs to the Ycf3 family.

The protein resides in the cellular thylakoid membrane. In terms of biological role, essential for the assembly of the photosystem I (PSI) complex. May act as a chaperone-like factor to guide the assembly of the PSI subunits. This is Photosystem I assembly protein Ycf3 from Prochlorococcus marinus (strain MIT 9301).